Here is a 94-residue protein sequence, read N- to C-terminus: Large ribosomal subunit protein uL23 (94 aa).

Belongs to the universal ribosomal protein uL23 family. As to quaternary structure, part of the 50S ribosomal subunit. Contacts protein L29, and trigger factor when it is bound to the ribosome.

Its function is as follows. One of the early assembly proteins it binds 23S rRNA. One of the proteins that surrounds the polypeptide exit tunnel on the outside of the ribosome. Forms the main docking site for trigger factor binding to the ribosome. The chain is Large ribosomal subunit protein uL23 from Phytoplasma australiense.